The chain runs to 397 residues: Elongation factor Tu (397 aa).

The tr-type G domain maps to 10-207; the sequence is LPHVNVGTIG…TLDAYIPEPV (198 aa). Positions 19–26 are G1; that stretch reads GHVDHGKT. 19–26 lines the GTP pocket; that stretch reads GHVDHGKT. T26 is a binding site for Mg(2+). A G2 region spans residues 60–64; the sequence is GITIN. The tract at residues 81–84 is G3; it reads DCPG. GTP-binding positions include 81 to 85 and 136 to 139; these read DCPGH and NKAD. Residues 136–139 are G4; sequence NKAD. The segment at 174 to 176 is G5; sequence SAR.

Belongs to the TRAFAC class translation factor GTPase superfamily. Classic translation factor GTPase family. EF-Tu/EF-1A subfamily. Monomer.

Its subcellular location is the cytoplasm. It carries out the reaction GTP + H2O = GDP + phosphate + H(+). In terms of biological role, GTP hydrolase that promotes the GTP-dependent binding of aminoacyl-tRNA to the A-site of ribosomes during protein biosynthesis. The chain is Elongation factor Tu from Pseudomonas entomophila (strain L48).